We begin with the raw amino-acid sequence, 190 residues long: Putative CRISPR system CMR subunit Cmr7 2 (190 aa).

It belongs to the CRISPR system Cmr7 family. In terms of assembly, homodimer.

In terms of biological role, CRISPR (clustered regularly interspaced short palindromic repeat) is an adaptive immune system that provides protection against mobile genetic elements (viruses, transposable elements and conjugative plasmids). CRISPR clusters contain spacers, sequences complementary to antecedent mobile elements, and target invading nucleic acids. CRISPR clusters are transcribed and processed into CRISPR RNA (crRNA). The protein is Putative CRISPR system CMR subunit Cmr7 2 (cmr7b) of Saccharolobus solfataricus (strain ATCC 35092 / DSM 1617 / JCM 11322 / P2) (Sulfolobus solfataricus).